The sequence spans 449 residues: Probable glycine dehydrogenase (decarboxylating) subunit 1 (449 aa).

The protein belongs to the GcvP family. N-terminal subunit subfamily. In terms of assembly, the glycine cleavage system is composed of four proteins: P, T, L and H. In this organism, the P 'protein' is a heterodimer of two subunits.

The catalysed reaction is N(6)-[(R)-lipoyl]-L-lysyl-[glycine-cleavage complex H protein] + glycine + H(+) = N(6)-[(R)-S(8)-aminomethyldihydrolipoyl]-L-lysyl-[glycine-cleavage complex H protein] + CO2. Functionally, the glycine cleavage system catalyzes the degradation of glycine. The P protein binds the alpha-amino group of glycine through its pyridoxal phosphate cofactor; CO(2) is released and the remaining methylamine moiety is then transferred to the lipoamide cofactor of the H protein. This Sulfurisphaera tokodaii (strain DSM 16993 / JCM 10545 / NBRC 100140 / 7) (Sulfolobus tokodaii) protein is Probable glycine dehydrogenase (decarboxylating) subunit 1.